The sequence spans 240 residues: Ubiquinone biosynthesis O-methyltransferase (240 aa).

4 residues coordinate S-adenosyl-L-methionine: arginine 44, glycine 64, aspartate 85, and methionine 129.

This sequence belongs to the methyltransferase superfamily. UbiG/COQ3 family.

The enzyme catalyses a 3-demethylubiquinol + S-adenosyl-L-methionine = a ubiquinol + S-adenosyl-L-homocysteine + H(+). The catalysed reaction is a 3-(all-trans-polyprenyl)benzene-1,2-diol + S-adenosyl-L-methionine = a 2-methoxy-6-(all-trans-polyprenyl)phenol + S-adenosyl-L-homocysteine + H(+). The protein operates within cofactor biosynthesis; ubiquinone biosynthesis. Functionally, O-methyltransferase that catalyzes the 2 O-methylation steps in the ubiquinone biosynthetic pathway. The chain is Ubiquinone biosynthesis O-methyltransferase from Escherichia coli O157:H7.